A 394-amino-acid polypeptide reads, in one-letter code: Acetate kinase (394 aa).

Asparagine 7 provides a ligand contact to Mg(2+). ATP is bound at residue lysine 14. A substrate-binding site is contributed by arginine 90. The active-site Proton donor/acceptor is the aspartate 147. ATP-binding positions include 204–208, 278–280, and 326–330; these read HLGNG, DLR, and GIGEN. Glutamate 380 is a Mg(2+) binding site.

It belongs to the acetokinase family. As to quaternary structure, homodimer. Requires Mg(2+) as cofactor. Mn(2+) is required as a cofactor.

Its subcellular location is the cytoplasm. The enzyme catalyses acetate + ATP = acetyl phosphate + ADP. It functions in the pathway metabolic intermediate biosynthesis; acetyl-CoA biosynthesis; acetyl-CoA from acetate: step 1/2. In terms of biological role, catalyzes the formation of acetyl phosphate from acetate and ATP. Can also catalyze the reverse reaction. In Flavobacterium johnsoniae (strain ATCC 17061 / DSM 2064 / JCM 8514 / BCRC 14874 / CCUG 350202 / NBRC 14942 / NCIMB 11054 / UW101) (Cytophaga johnsonae), this protein is Acetate kinase.